Reading from the N-terminus, the 161-residue chain is Cytochrome c-type biogenesis protein CcmE (161 aa).

Residues 1–13 are Cytoplasmic-facing; that stretch reads MSWLPKSPKARRR. Residues 14-34 traverse the membrane as a helical; Signal-anchor for type II membrane protein segment; it reads LMLVAAIAPVLAVAAGLTLWG. Over 35-161 the chain is Periplasmic; it reads LSDSISFFYT…QRPEHQGDAL (127 aa). Heme contacts are provided by histidine 128 and tyrosine 132.

It belongs to the CcmE/CycJ family.

Its subcellular location is the cell inner membrane. In terms of biological role, heme chaperone required for the biogenesis of c-type cytochromes. Transiently binds heme delivered by CcmC and transfers the heme to apo-cytochromes in a process facilitated by CcmF and CcmH. This is Cytochrome c-type biogenesis protein CcmE from Phenylobacterium zucineum (strain HLK1).